The following is a 274-amino-acid chain: Nitrogenase iron protein (274 aa).

Glycine 8 to serine 15 serves as a coordination point for ATP. [4Fe-4S] cluster is bound at residue cysteine 94. Arginine 97 is modified (ADP-ribosylarginine; by dinitrogenase reductase ADP-ribosyltransferase). Cysteine 131 lines the [4Fe-4S] cluster pocket.

This sequence belongs to the NifH/BchL/ChlL family. In terms of assembly, homodimer. Requires [4Fe-4S] cluster as cofactor. In terms of processing, the reversible ADP-ribosylation of Arg-97 inactivates the nitrogenase reductase and regulates nitrogenase activity.

The enzyme catalyses N2 + 8 reduced [2Fe-2S]-[ferredoxin] + 16 ATP + 16 H2O = H2 + 8 oxidized [2Fe-2S]-[ferredoxin] + 2 NH4(+) + 16 ADP + 16 phosphate + 6 H(+). Functionally, the key enzymatic reactions in nitrogen fixation are catalyzed by the nitrogenase complex, which has 2 components: the iron protein and the molybdenum-iron protein. This is Nitrogenase iron protein from Chlorobium phaeobacteroides (strain BS1).